A 644-amino-acid chain; its full sequence is 3D-(3,5/4)-trihydroxycyclohexane-1,2-dione hydrolase 2 (644 aa).

Glu-65 is a thiamine diphosphate binding site. Positions 442 to 522 (SLPGDLQRMW…INVLLFDNSG (81 aa)) are thiamine pyrophosphate binding. Asp-493 and Asn-520 together coordinate Mg(2+).

Belongs to the TPP enzyme family. Requires Mg(2+) as cofactor. Thiamine diphosphate serves as cofactor.

The enzyme catalyses 3D-3,5/4-trihydroxycyclohexane-1,2-dione + H2O = 5-deoxy-D-glucuronate + H(+). It participates in polyol metabolism; myo-inositol degradation into acetyl-CoA; acetyl-CoA from myo-inositol: step 3/7. Its function is as follows. Involved in the cleavage of the C1-C2 bond of 3D-(3,5/4)-trihydroxycyclohexane-1,2-dione (THcHDO) to yield 5-deoxy-glucuronate (5DG). The chain is 3D-(3,5/4)-trihydroxycyclohexane-1,2-dione hydrolase 2 from Bacillus cereus (strain ZK / E33L).